A 260-amino-acid polypeptide reads, in one-letter code: MNPPNRTGHRFFVFSGKLAGLLYSLCCYLFFLLTALYLIGFLAGIGVPKDINSGPGITWPLAVLVDAILITLFAAQHSGMARKNFKRWWMRFIPATLERATYVLSSCLVLALLFVLWQPIATPVWNVESPWGKGLLIALFWLGWGIVLLATFLISHFELFGVKQTLDAWRKRIPEKPAFKSPWLYKLVRHPLYVGFLIAFWATPDMTAGHLLFAILSTSYILIGAHLEEKDLVDSLGEVYQSYQQEVGMLVPKRNQTKGR.

5 helical membrane passes run 27–47, 55–75, 107–127, 134–154, and 196–216; these read CYLFFLLTALYLIGFLAGIGV, PGITWPLAVLVDAILITLFAA, CLVLALLFVLWQPIATPVWNV, GLLIALFWLGWGIVLLATFLI, and FLIAFWATPDMTAGHLLFAIL.

This sequence belongs to the nurim family.

Its subcellular location is the membrane. The catalysed reaction is methanethiol + S-adenosyl-L-methionine = dimethyl sulfide + S-adenosyl-L-homocysteine + H(+). Its function is as follows. Catalyzes the methylation of methanethiol (MeSH) to yield dimethylsulphide (DMS). This Pseudomonas sp. (strain GM41(2012)) protein is Methanethiol S-methyltransferase.